A 171-amino-acid chain; its full sequence is Large ribosomal subunit protein bL21 (171 aa).

The segment at 144–171 (AAPAKAEAAPKKKAAPKKAAAKTEEGEA) is disordered. A compositionally biased stretch (basic residues) spans 154–163 (KKKAAPKKAA).

Belongs to the bacterial ribosomal protein bL21 family. As to quaternary structure, part of the 50S ribosomal subunit. Contacts protein L20.

In terms of biological role, this protein binds to 23S rRNA in the presence of protein L20. This Caulobacter vibrioides (strain ATCC 19089 / CIP 103742 / CB 15) (Caulobacter crescentus) protein is Large ribosomal subunit protein bL21.